Here is a 128-residue protein sequence, read N- to C-terminus: Holo-[acyl-carrier-protein] synthase (128 aa).

Mg(2+) contacts are provided by aspartate 8 and glutamate 59.

It belongs to the P-Pant transferase superfamily. AcpS family. The cofactor is Mg(2+).

The protein localises to the cytoplasm. The catalysed reaction is apo-[ACP] + CoA = holo-[ACP] + adenosine 3',5'-bisphosphate + H(+). Its function is as follows. Transfers the 4'-phosphopantetheine moiety from coenzyme A to a Ser of acyl-carrier-protein. This is Holo-[acyl-carrier-protein] synthase from Rickettsia typhi (strain ATCC VR-144 / Wilmington).